The sequence spans 235 residues: Large ribosomal subunit protein uL1 (235 aa).

It belongs to the universal ribosomal protein uL1 family. Part of the 50S ribosomal subunit.

Its function is as follows. Binds directly to 23S rRNA. The L1 stalk is quite mobile in the ribosome, and is involved in E site tRNA release. In terms of biological role, protein L1 is also a translational repressor protein, it controls the translation of the L11 operon by binding to its mRNA. The protein is Large ribosomal subunit protein uL1 of Mycolicibacterium paratuberculosis (strain ATCC BAA-968 / K-10) (Mycobacterium paratuberculosis).